A 596-amino-acid chain; its full sequence is MMNDNKYIHIDSCVIEKHKIWDSLITKFGSHDLILQSAYIDSLIIWIPKERIIPIMEFLKQILAPHVMLYDLHGIDERLRMYRKELPEADFTVFYHIMSMSRNYDVILKVPLLENAMNVTTITSVFMNANWYERETWEMFGIHFDYHPNLTRIIMPKCWKGFPLRKEYPARATEFYPAFTLTRKKEDLAMDDLLFKPEEWGMHRNNKHEDFMFLNLGPNHPSVHGVFRIILQLSGEEIIDCVPDIGYHHRGAEKMGERQSWHSYIPYTDRVEYLGGCINEMPYVLAVEKLAGIVVPDRAKIIRIMLSELFRINSHLLYVSTYLQDVGVMTPVFLAFTDRQKIYDVIESITGARMHPAWFRIGGVADDLPLNWSDLLKQCLDWLPKRIAFYIDIALKNSIFKKRTCGIGSYGAKEALSWGVTGSGLRATGIEFDLRKSRPYSGYENFDFDIPIGNGLSDCYNRLVLKIEEMYQSIRILNQCLKNMPTGPVKSDHPLTTPPMKKYALKHIETLITHFLQVSWGPVIPPNESLQMVEATKGINSYYLISDGNTMSYRTRIRTPSFPHLQQIPSVIRGSLIPDLIAYLGSIDFVMSDVDR.

The segment at M1–E186 is NADH dehydrogenase I subunit C. Positions D210–R596 are NADH dehydrogenase I subunit D.

The protein in the N-terminal section; belongs to the complex I 30 kDa subunit family. In the C-terminal section; belongs to the complex I 49 kDa subunit family. NDH-1 is composed of 13 different subunits. Subunits NuoB, CD, E, F, and G constitute the peripheral sector of the complex.

Its subcellular location is the cell inner membrane. It catalyses the reaction a quinone + NADH + 5 H(+)(in) = a quinol + NAD(+) + 4 H(+)(out). Functionally, NDH-1 shuttles electrons from NADH, via FMN and iron-sulfur (Fe-S) centers, to quinones in the respiratory chain. The immediate electron acceptor for the enzyme in this species is believed to be ubiquinone. Couples the redox reaction to proton translocation (for every two electrons transferred, four hydrogen ions are translocated across the cytoplasmic membrane), and thus conserves the redox energy in a proton gradient. This is NADH-quinone oxidoreductase subunit C/D from Blochmanniella floridana.